A 97-amino-acid polypeptide reads, in one-letter code: Putative pterin-4-alpha-carbinolamine dehydratase (97 aa).

It belongs to the pterin-4-alpha-carbinolamine dehydratase family.

The catalysed reaction is (4aS,6R)-4a-hydroxy-L-erythro-5,6,7,8-tetrahydrobiopterin = (6R)-L-erythro-6,7-dihydrobiopterin + H2O. The sequence is that of Putative pterin-4-alpha-carbinolamine dehydratase from Saccharolobus solfataricus (strain ATCC 35092 / DSM 1617 / JCM 11322 / P2) (Sulfolobus solfataricus).